The following is a 253-amino-acid chain: uncharacterized protein (253 aa).

2 C2HC LYAR-type zinc fingers span residues 1-26 and 27-51; these read MVFFSCNNCGEACKKNQVERHLFQCR and NTTFSCIDCQLVYTRETYKDHVKCI. Positions 6, 9, 21, 25, 32, 35, 47, and 50 each coordinate Zn(2+). Residues 136–171 adopt a coiled-coil conformation; sequence AAEADKMREEAIRKQEETQKMEKAQKEAAAAAKKET.

The protein resides in the nucleus. This is an uncharacterized protein from Caenorhabditis elegans.